A 138-amino-acid polypeptide reads, in one-letter code: Small ribosomal subunit protein uS11 (138 aa).

Residues 1 to 12 (MPPKKAAASSAK) show a composition bias toward low complexity. The segment at 1–28 (MPPKKAAASSAKKGQKTRRREKKNVPHG) is disordered. Residues 13 to 22 (KGQKTRRREK) are compositionally biased toward basic residues.

This sequence belongs to the universal ribosomal protein uS11 family. In terms of assembly, part of the 30S ribosomal subunit. Interacts with proteins S7 and S18. Binds to IF-3.

In terms of biological role, located on the platform of the 30S subunit, it bridges several disparate RNA helices of the 16S rRNA. Forms part of the Shine-Dalgarno cleft in the 70S ribosome. The sequence is that of Small ribosomal subunit protein uS11 from Mycobacterium sp. (strain JLS).